Consider the following 510-residue polypeptide: Light-independent protochlorophyllide reductase subunit B (510 aa).

[4Fe-4S] cluster is bound at residue D36. D296 serves as the catalytic Proton donor. A substrate-binding site is contributed by 431-432 (GM).

The protein belongs to the ChlB/BchB/BchZ family. In terms of assembly, protochlorophyllide reductase is composed of three subunits; ChlL, ChlN and ChlB. Forms a heterotetramer of two ChlB and two ChlN subunits. Requires [4Fe-4S] cluster as cofactor.

It catalyses the reaction chlorophyllide a + oxidized 2[4Fe-4S]-[ferredoxin] + 2 ADP + 2 phosphate = protochlorophyllide a + reduced 2[4Fe-4S]-[ferredoxin] + 2 ATP + 2 H2O. The protein operates within porphyrin-containing compound metabolism; chlorophyll biosynthesis (light-independent). In terms of biological role, component of the dark-operative protochlorophyllide reductase (DPOR) that uses Mg-ATP and reduced ferredoxin to reduce ring D of protochlorophyllide (Pchlide) to form chlorophyllide a (Chlide). This reaction is light-independent. The NB-protein (ChlN-ChlB) is the catalytic component of the complex. This chain is Light-independent protochlorophyllide reductase subunit B, found in Synechococcus sp. (strain JA-3-3Ab) (Cyanobacteria bacterium Yellowstone A-Prime).